A 332-amino-acid chain; its full sequence is Cell growth regulator with RING finger domain protein 1 (332 aa).

The RING-type zinc-finger motif lies at 274-309; sequence CVVCQNGGVNWVLLPCRHACLCDSCVCYFKQCPMCR.

As to expression, highly expressed in testis, lower levels of expression is seen in skeletal muscle, liver, lung and brain.

It localises to the nucleus. Its subcellular location is the endoplasmic reticulum. Its function is as follows. Able to inhibit growth in several cell lines. The sequence is that of Cell growth regulator with RING finger domain protein 1 (Cgrrf1) from Rattus norvegicus (Rat).